A 92-amino-acid chain; its full sequence is Small ribosomal subunit protein bS18 (92 aa).

Residues 1–27 (MTQQSNSADRKPRGKGPKRPRKPKVDP) are disordered. Residues 12–22 (PRGKGPKRPRK) are compositionally biased toward basic residues.

It belongs to the bacterial ribosomal protein bS18 family. As to quaternary structure, part of the 30S ribosomal subunit. Forms a tight heterodimer with protein bS6.

Functionally, binds as a heterodimer with protein bS6 to the central domain of the 16S rRNA, where it helps stabilize the platform of the 30S subunit. The polypeptide is Small ribosomal subunit protein bS18 (Deinococcus deserti (strain DSM 17065 / CIP 109153 / LMG 22923 / VCD115)).